Reading from the N-terminus, the 516-residue chain is Melianol synthase CYP71BQ17 (516 aa).

The helical transmembrane segment at 14-34 (MPHLPSLPVSLSFLLFFLMLV) threads the bilayer. Cys-454 lines the heme pocket.

The protein belongs to the cytochrome P450 family. It depends on heme as a cofactor. Mainly expressed in roots and, to a lesser extent, in stems and old leaves.

Its subcellular location is the membrane. It carries out the reaction dihydroniloticin + 2 reduced [NADPH--hemoprotein reductase] + 2 O2 = melianol + 2 oxidized [NADPH--hemoprotein reductase] + 3 H2O + 2 H(+). The protein operates within secondary metabolite biosynthesis; terpenoid biosynthesis. Its function is as follows. Monooxygenase involved in the biosynthesis of quassinoids triterpene natural products such as ailanthone, chaparrinone, glaucarubinone and amarolide, allelopathic degraded triterpene lactones inhibiting the growth of other plants, and possessing antimalarial, antifeedant, insecticidal, anti-inflammatory and anticancer activities. Catalyzes the conversion of dihydroniloticin to the protolimonoid melianol. The polypeptide is Melianol synthase CYP71BQ17 (Ailanthus altissima (Tree-of-heaven)).